A 120-amino-acid chain; its full sequence is Cytochrome c-550 (120 aa).

The helical transmembrane segment at 5-25 (PLIPFLLIAVLGIGLTFFLSV) threads the bilayer. Topologically, residues 26–120 (KGLDDSREIA…DMAEWVSKIK (95 aa)) are periplasmic. Residues C60, C63, H64, and M99 each contribute to the heme c site.

Post-translationally, binds 1 heme c group covalently per subunit.

Its subcellular location is the cell membrane. Functionally, not essential for growth on minimal or rich media. The chain is Cytochrome c-550 (cccA) from Bacillus subtilis (strain 168).